A 977-amino-acid polypeptide reads, in one-letter code: Short transient receptor potential channel 4 (977 aa).

At M1–R324 the chain is on the cytoplasmic side. ANK repeat units follow at residues L29–K60, R71–N93, V96–H118, and P141–G165. The Zn(2+) site is built by H172, C176, C178, and C181. A coiled-coil region spans residues L223–R260. The segment at residues H325–I359 is an intramembrane region (discontinuously helical). The Cytoplasmic segment spans residues R360–P362. A helical transmembrane segment spans residues F363–A383. Residues S384–E403 lie on the Extracellular side of the membrane. The helical transmembrane segment at W404–I418 threads the bilayer. Positions 417, 420, 435, and 438 each coordinate Ca(2+). The Cytoplasmic segment spans residues K419–D432. The chain crosses the membrane as a helical span at residues W433–I453. The Extracellular segment spans residues V454–L475. Residues V476–A498 form a helical membrane-spanning segment. Residues N499–R511 are Cytoplasmic-facing. Residues M512–L534 traverse the membrane as a helical segment. At N535 to T599 the chain is on the extracellular side. C549 and C554 form a disulfide bridge. Residues M600–M620 traverse the membrane as a helical segment. The interval M615 to L977 is interaction with ITPR1, ITPR2 and ITPR3. The Cytoplasmic segment spans residues N621–L977. The segment at A767–R790 is disordered. Positions S776 to K787 are enriched in basic and acidic residues. Phosphotyrosine; by FYN occurs at positions 959 and 972. Residues T975–L977 are PDZ-binding domain.

It belongs to the transient receptor (TC 1.A.4) family. STrpC subfamily. TRPC4 sub-subfamily. As to quaternary structure, homotetramer. Heterotetramer with TRPC1 and/or TRPC5. Forms a heteromeric ion channel with TRPC1, with a 1:3 TRPC1:TRPC4 stoichiometry. Interacts with TRPC4AP. Isoform alpha but not isoform beta interacts with ITPR1, ITPR2 and ITPR3. Interacts with NHERF1. Interacts with MX1 and RNF24. Interacts (via CIRB domain) with SESTD1 (via the spectrin 1 repeat) and SPTBN5 (via C-terminus). Interacts with CDH5 and CTNNB1. Interacts (via protein 4.1-binding domain) with EPB41L2. Interacts with PLSCR1.

Its subcellular location is the cell membrane. It catalyses the reaction Ca(2+)(in) = Ca(2+)(out). The enzyme catalyses Na(+)(in) = Na(+)(out). It carries out the reaction Li(+)(in) = Li(+)(out). The catalysed reaction is Cs(+)(in) = Cs(+)(out). Its activity is regulated as follows. May be operated by a phosphatidylinositol second messenger system activated by receptor tyrosine kinases or G-protein coupled receptors. May be activated by intracellular calcium store depletion. Functionally, forms a receptor-activated non-selective calcium permeant cation channel. Acts as a cell-cell contact-dependent endothelial calcium entry channel. Forms a homomeric ion channel or a heteromeric ion channel with TRPC1; the heteromeric ion channel has reduced calcium permeability compared to the homomeric channel. Also permeable to monovalent ions including sodium, lithium and cesium ions. Its function is as follows. Forms a non-selective a receptor-activated calcium permeant cation channel. Probably is operated by a phosphatidylinositol second messenger system activated by receptor tyrosine kinases or G-protein coupled receptors. This is Short transient receptor potential channel 4 (Trpc4) from Rattus norvegicus (Rat).